Reading from the N-terminus, the 254-residue chain is 3-dehydroquinate dehydratase (254 aa).

Residues 47–49 (EWR) and R83 contribute to the 3-dehydroquinate site. The active-site Proton donor/acceptor is H144. Residue K171 is the Schiff-base intermediate with substrate of the active site. The 3-dehydroquinate site is built by R214, S233, and Q237.

The protein belongs to the type-I 3-dehydroquinase family. In terms of assembly, homodimer.

The catalysed reaction is 3-dehydroquinate = 3-dehydroshikimate + H2O. It participates in metabolic intermediate biosynthesis; chorismate biosynthesis; chorismate from D-erythrose 4-phosphate and phosphoenolpyruvate: step 3/7. Functionally, involved in the third step of the chorismate pathway, which leads to the biosynthesis of aromatic amino acids. Catalyzes the cis-dehydration of 3-dehydroquinate (DHQ) and introduces the first double bond of the aromatic ring to yield 3-dehydroshikimate. This Bacillus licheniformis (strain ATCC 14580 / DSM 13 / JCM 2505 / CCUG 7422 / NBRC 12200 / NCIMB 9375 / NCTC 10341 / NRRL NRS-1264 / Gibson 46) protein is 3-dehydroquinate dehydratase.